We begin with the raw amino-acid sequence, 203 residues long: DNA-directed RNA polymerase subunit gamma (203 aa).

Cysteine 34, cysteine 36, cysteine 49, and cysteine 52 together coordinate Zn(2+).

Belongs to the RNA polymerase beta' chain family. RpoC1 subfamily. As to quaternary structure, in cyanobacteria the RNAP catalytic core is composed of 2 alpha, 1 beta, 1 beta', 1 gamma and 1 omega subunit. When a sigma factor is associated with the core the holoenzyme is formed, which can initiate transcription. The cofactor is Zn(2+).

The catalysed reaction is RNA(n) + a ribonucleoside 5'-triphosphate = RNA(n+1) + diphosphate. In terms of biological role, DNA-dependent RNA polymerase catalyzes the transcription of DNA into RNA using the four ribonucleoside triphosphates as substrates. The protein is DNA-directed RNA polymerase subunit gamma (rpoC1) of Prochloron sp.